We begin with the raw amino-acid sequence, 572 residues long: [Pyruvate dehydrogenase [acetyl-transferring]]-phosphatase 1, mitochondrial (572 aa).

Residues 95-122 (NTSGNINMPSPNPKGTETQKSQRSQNDQ) are disordered. The PPM-type phosphatase domain occupies 153 to 543 (RYDVAQLPSN…DDLTVTVAFF (391 aa)). 4 residues coordinate Mn(2+): Asp-197, Gly-198, Asp-424, and Asp-480. The span at 470-480 (EAQRPAFRYKD) shows a compositional bias: basic and acidic residues. The segment at 470 to 492 (EAQRPAFRYKDNNSSSPSGSNPE) is disordered. A compositionally biased stretch (low complexity) spans 481-491 (NNSSSPSGSNP).

This sequence belongs to the PP2C family. Mg(2+) is required as a cofactor. The cofactor is Mn(2+). Processed by mitochondrial inner membrane protease (IMP) complex and released to the intermembrane space.

It localises to the mitochondrion intermembrane space. It carries out the reaction O-phospho-L-seryl-[pyruvate dehydrogenase E1 alpha subunit] + H2O = L-seryl-[pyruvate dehydrogenase E1 alpha subunit] + phosphate. Catalyzes the dephosphorylation and concomitant reactivation of the E1 alpha subunit (PDA1) of the pyruvate dehydrogenase complex. The chain is [Pyruvate dehydrogenase [acetyl-transferring]]-phosphatase 1, mitochondrial (PTC5) from Saccharomyces cerevisiae (strain ATCC 204508 / S288c) (Baker's yeast).